A 212-amino-acid chain; its full sequence is Dephospho-CoA kinase (212 aa).

The DPCK domain occupies 8–212 (LVGVTGGLGS…QLLQQAMLRR (205 aa)). 16–21 (GSGKSM) contributes to the ATP binding site.

This sequence belongs to the CoaE family.

Its subcellular location is the cytoplasm. The catalysed reaction is 3'-dephospho-CoA + ATP = ADP + CoA + H(+). The protein operates within cofactor biosynthesis; coenzyme A biosynthesis; CoA from (R)-pantothenate: step 5/5. In terms of biological role, catalyzes the phosphorylation of the 3'-hydroxyl group of dephosphocoenzyme A to form coenzyme A. This chain is Dephospho-CoA kinase, found in Chlorobium chlorochromatii (strain CaD3).